The primary structure comprises 149 residues: Hut operon positive regulatory protein (149 aa).

The protein belongs to the HutP family. As to quaternary structure, homohexamer.

Its function is as follows. Antiterminator that binds to cis-acting regulatory sequences on the mRNA in the presence of histidine, thereby suppressing transcription termination and activating the hut operon for histidine utilization. The chain is Hut operon positive regulatory protein from Geobacillus thermodenitrificans (strain NG80-2).